Consider the following 558-residue polypeptide: uncharacterized protein (558 aa).

Residues 338-354 (STSTSTSTSTSSSNDLN) show a composition bias toward low complexity. A disordered region spans residues 338 to 380 (STSTSTSTSTSSSNDLNLDSDSDDSDSDDSDSDSDSDSDSEID). Positions 355–380 (LDSDSDDSDSDDSDSDSDSDSDSEID) are enriched in acidic residues.

The protein resides in the plastid. This is an uncharacterized protein from Euglena longa (Euglenophycean alga).